The primary structure comprises 901 residues: MLIPSKLSRPVRLDHTVVRERLLAKLSGANNFRLALITSPAGYGKTTLISQWAAGKNDIGWYSLDEGDNQQERFASYLIAAVQQATNGHCAICETMAQKRQYASLTSLFAQLFIELAEWHSPLYLVIDDYHLITNPVIHESMRFFIRHQPENLTLVVLSRNLPQLGIANLRVRDQLLEIGSQQLAFTHQEAKQFFDCRLSSPIEAAESSRICDDVSGWATALQLIALSARQNTHSAHKSARRLAGINASHLSDYLVDEVLDNVDLATRHFLLKSAILRSMNDALITRVTGEENGQMRLEEIERQGLFLQRMDDTGEWFCYHPLFGNFLRQRCQWELAAELPEIHRAAAESWMAQGFPSEAIHHALAAGDALMLRDILLNHAWSLFNHSELSLLEESLKALPWDSLLENPQLVLLQAWLMQSQHRYGEVNTLLARAEHEIKDIREGTMHAEFNALRAQVAINDGSPDEAERLAKLALEELPPGWFYSRIVATSVLGEVLHCKGELTRSLALMQQTEQMARQHDVWHYALWSLIQQSEILFAQGFLQTAWETQEKAFQLINEQHLEQLPMHEFLVRIRAQLLWAWARLDEAEASARSGIEVLSSYQPQQQLQCLAMLIQCSLARGDLDNARSQLNRLENLLGNGKYHSDWISNANKVRVIYWQMTGDKAAAANWLRHTAKPEFANNHFLQGQWRNIARAQILLGEFESAEIVLEELNENARSLRLMSDLNRNLLLLNQLYWQAGRKSDAQRVLLDALKLANRTGFISHFVIEGEAMAQQLRQLIQLNTLPELEQHRAQRILREINQHHRHKFAHFDENFVERLLNHPEVPELIRTSPLTQREWQVLGLIYSGYSNEQIAGELEVAATTIKTHIRNLYQKLGVAHRQAAVQHAQKLLKMMGYGV.

ATP is bound at residue Ser39 to Thr46. The HTH luxR-type domain maps to Glu829–Leu894. The H-T-H motif DNA-binding region spans Asn853–Arg872.

Belongs to the MalT family. Monomer in solution. Oligomerizes to an active state in the presence of the positive effectors ATP and maltotriose.

Its activity is regulated as follows. Activated by ATP and maltotriose, which are both required for DNA binding. In terms of biological role, positively regulates the transcription of the maltose regulon whose gene products are responsible for uptake and catabolism of malto-oligosaccharides. Specifically binds to the promoter region of its target genes, recognizing a short DNA motif called the MalT box. The sequence is that of HTH-type transcriptional regulator MalT from Escherichia coli O6:K15:H31 (strain 536 / UPEC).